Reading from the N-terminus, the 159-residue chain is Major latex protein 149 (159 aa).

Belongs to the MLP family. As to expression, laticifer.

The protein localises to the vacuole. It is found in the cytoplasmic vesicle. Its function is as follows. Not known; MLPs constitute up to 50% of the soluble latex protein. The chain is Major latex protein 149 (MLP149) from Papaver somniferum (Opium poppy).